Consider the following 174-residue polypeptide: Variant surface antigen B (174 aa).

An N-terminal signal peptide occupies residues 1–29 (MKKSIFSKKLLVSFGSLVALASIPLIAIS). Cysteine 30 is lipidated: N-palmitoyl cysteine. Residue cysteine 30 is the site of S-diacylglycerol cysteine attachment. A disordered region spans residues 32–174 (QTNTDKSQQP…SQDSGNGSTK (143 aa)). Positions 38–49 (SQQPGSGSSTSG) are enriched in low complexity. Residues 50–75 (GQSGTGLGSGTTTGGQSGTTTGGRSG) are compositionally biased toward gly residues. Over residues 76–97 (SGSSSSTTGGQTGTGSDSQDSG) the composition is skewed to low complexity. 7 tandem repeats follow at residues 88 to 99 (GTGSDSQDSGAK), 100 to 111 (GTGSDSQDSGAK), 112 to 123 (GTGSDSQDSGAK), 124 to 135 (GTGSDSQDSGAK), 136 to 147 (GTGSDSQDSGAK), 148 to 159 (GTGSDSQDSGAK), and 160 to 171 (GTGSDSQDSGNG). Residues 88–171 (GTGSDSQDSG…GSDSQDSGNG (84 aa)) form a 7 X 12 AA tandem repeats region. Positions 102-174 (GSDSQDSGAK…SQDSGNGSTK (73 aa)) are enriched in polar residues.

Its subcellular location is the cell membrane. Responsible for the antigenic diversity for host adaptation. This Mesomycoplasma hyorhinis (Mycoplasma hyorhinis) protein is Variant surface antigen B (vlpB).